A 167-amino-acid chain; its full sequence is Antibacterial peptide PMAP-37 (167 aa).

The first 29 residues, 1–29, serve as a signal peptide directing secretion; it reads METQRASLCLGRWSLWLLLLALVVPSASA. A propeptide spanning residues 30 to 130 is cleaved from the precursor; that stretch reads QALSYREAVL…DITCNEIQSV (101 aa). 2 disulfides stabilise this stretch: Cys-85-Cys-96 and Cys-107-Cys-124.

This sequence belongs to the cathelicidin family.

Its subcellular location is the secreted. Its function is as follows. Exerts antimicrobial activity against both Gram-positive and negative bacteria with minimal inhibitory concentrations ranging over 1-4 micro molar. Its activity appears to be mediated by its ability to damage bacterial membranes. This Sus scrofa (Pig) protein is Antibacterial peptide PMAP-37 (PMAP37).